Here is a 266-residue protein sequence, read N- to C-terminus: Putative carbamate hydrolase RutD (266 aa).

This sequence belongs to the AB hydrolase superfamily. Hydrolase RutD family.

The enzyme catalyses carbamate + 2 H(+) = NH4(+) + CO2. In terms of biological role, involved in pyrimidine catabolism. May facilitate the hydrolysis of carbamate, a reaction that can also occur spontaneously. In Escherichia coli O111:H- (strain 11128 / EHEC), this protein is Putative carbamate hydrolase RutD.